The chain runs to 513 residues: ATP synthase subunit alpha (513 aa).

169–176 (GDRQTGKT) contacts ATP.

This sequence belongs to the ATPase alpha/beta chains family. In terms of assembly, F-type ATPases have 2 components, CF(1) - the catalytic core - and CF(0) - the membrane proton channel. CF(1) has five subunits: alpha(3), beta(3), gamma(1), delta(1), epsilon(1). CF(0) has three main subunits: a(1), b(2) and c(9-12). The alpha and beta chains form an alternating ring which encloses part of the gamma chain. CF(1) is attached to CF(0) by a central stalk formed by the gamma and epsilon chains, while a peripheral stalk is formed by the delta and b chains.

Its subcellular location is the cell inner membrane. It carries out the reaction ATP + H2O + 4 H(+)(in) = ADP + phosphate + 5 H(+)(out). Functionally, produces ATP from ADP in the presence of a proton gradient across the membrane. The alpha chain is a regulatory subunit. The protein is ATP synthase subunit alpha of Methylobacillus flagellatus (strain ATCC 51484 / DSM 6875 / VKM B-1610 / KT).